Here is a 341-residue protein sequence, read N- to C-terminus: Glyceraldehyde-3-phosphate dehydrogenase 2 (341 aa).

NAD(+)-binding positions include 12–13 (RI), arginine 78, and threonine 120. D-glyceraldehyde 3-phosphate-binding positions include 152 to 154 (SCT) and threonine 183. Residue cysteine 153 is the Nucleophile of the active site. Asparagine 184 is a binding site for NAD(+). D-glyceraldehyde 3-phosphate-binding positions include arginine 198, 211 to 212 (TG), and arginine 234. Asparagine 313 serves as a coordination point for NAD(+).

Belongs to the glyceraldehyde-3-phosphate dehydrogenase family. Homotetramer.

It is found in the cytoplasm. The enzyme catalyses D-glyceraldehyde 3-phosphate + phosphate + NAD(+) = (2R)-3-phospho-glyceroyl phosphate + NADH + H(+). It functions in the pathway carbohydrate degradation; glycolysis; pyruvate from D-glyceraldehyde 3-phosphate: step 1/5. Its function is as follows. Catalyzes the oxidative phosphorylation of glyceraldehyde 3-phosphate (G3P) to 1,3-bisphosphoglycerate (BPG) using the cofactor NAD. The first reaction step involves the formation of a hemiacetal intermediate between G3P and a cysteine residue, and this hemiacetal intermediate is then oxidized to a thioester, with concomitant reduction of NAD to NADH. The reduced NADH is then exchanged with the second NAD, and the thioester is attacked by a nucleophilic inorganic phosphate to produce BPG. This Staphylococcus epidermidis (strain ATCC 35984 / DSM 28319 / BCRC 17069 / CCUG 31568 / BM 3577 / RP62A) protein is Glyceraldehyde-3-phosphate dehydrogenase 2 (gapA2).